Consider the following 286-residue polypeptide: uncharacterized protein (286 aa).

Disordered regions lie at residues 59 to 89 and 225 to 286; these read PESA…PGAK and RQRK…EDTR. The span at 69–85 shows a compositional bias: low complexity; the sequence is AEAESAGTAAATESHGA.

This is an uncharacterized protein from Mus musculus (Mouse).